We begin with the raw amino-acid sequence, 322 residues long: DNA primase small subunit PriS (322 aa).

Residues aspartate 100, aspartate 102, and aspartate 228 contribute to the active site.

This sequence belongs to the eukaryotic-type primase small subunit family. In terms of assembly, heterodimer of a small subunit (PriS) and a large subunit (PriL). The cofactor is Mg(2+). Mn(2+) serves as cofactor.

Catalytic subunit of DNA primase, an RNA polymerase that catalyzes the synthesis of short RNA molecules used as primers for DNA polymerase during DNA replication. The small subunit contains the primase catalytic core and has DNA synthesis activity on its own. Binding to the large subunit stabilizes and modulates the activity, increasing the rate of DNA synthesis while decreasing the length of the DNA fragments, and conferring RNA synthesis capability. The DNA polymerase activity may enable DNA primase to also catalyze primer extension after primer synthesis. May also play a role in DNA repair. This Sulfolobus acidocaldarius (strain ATCC 33909 / DSM 639 / JCM 8929 / NBRC 15157 / NCIMB 11770) protein is DNA primase small subunit PriS.